A 511-amino-acid chain; its full sequence is Histidine ammonia-lyase (511 aa).

A cross-link (5-imidazolinone (Ala-Gly)) is located at residues 142-144; the sequence is ASG. 2,3-didehydroalanine (Ser) is present on Ser143.

Belongs to the PAL/histidase family. Post-translationally, contains an active site 4-methylidene-imidazol-5-one (MIO), which is formed autocatalytically by cyclization and dehydration of residues Ala-Ser-Gly.

The protein localises to the cytoplasm. The catalysed reaction is L-histidine = trans-urocanate + NH4(+). The protein operates within amino-acid degradation; L-histidine degradation into L-glutamate; N-formimidoyl-L-glutamate from L-histidine: step 1/3. The chain is Histidine ammonia-lyase from Brucella suis biovar 1 (strain 1330).